We begin with the raw amino-acid sequence, 251 residues long: Ubiquinone/menaquinone biosynthesis C-methyltransferase UbiE (251 aa).

S-adenosyl-L-methionine is bound by residues threonine 74, aspartate 95, and 123–124 (NA).

The protein belongs to the class I-like SAM-binding methyltransferase superfamily. MenG/UbiE family.

It carries out the reaction a 2-demethylmenaquinol + S-adenosyl-L-methionine = a menaquinol + S-adenosyl-L-homocysteine + H(+). The enzyme catalyses a 2-methoxy-6-(all-trans-polyprenyl)benzene-1,4-diol + S-adenosyl-L-methionine = a 5-methoxy-2-methyl-3-(all-trans-polyprenyl)benzene-1,4-diol + S-adenosyl-L-homocysteine + H(+). It functions in the pathway quinol/quinone metabolism; menaquinone biosynthesis; menaquinol from 1,4-dihydroxy-2-naphthoate: step 2/2. It participates in cofactor biosynthesis; ubiquinone biosynthesis. Functionally, methyltransferase required for the conversion of demethylmenaquinol (DMKH2) to menaquinol (MKH2) and the conversion of 2-polyprenyl-6-methoxy-1,4-benzoquinol (DDMQH2) to 2-polyprenyl-3-methyl-6-methoxy-1,4-benzoquinol (DMQH2). This chain is Ubiquinone/menaquinone biosynthesis C-methyltransferase UbiE, found in Pseudoalteromonas translucida (strain TAC 125).